The following is a 1089-amino-acid chain: Protein phosphatase 1 regulatory subunit 3A (1089 aa).

Residues 32-57 (KATFKPGFSPQPSRRGSGSSEDMYLD) are disordered. Residues 37 to 51 (PGFSPQPSRRGSGSS) show a composition bias toward low complexity. 2 positions are modified to phosphoserine; by GSK3: S40 and S44. Phosphoserine occurs at positions 48 and 51. T58 is subject to Phosphothreonine. A PP1-binding motif motif is present at residues 64-67 (RRVS). The residue at position 67 (S67) is a Phosphoserine; by PKA. The CBM21 domain maps to 123–231 (EQLQVQKAVL…NNNGTNYILV (109 aa)). Disordered stretches follow at residues 385-420 (FYHS…GDTS), 479-501 (HGDS…KVDN), and 566-649 (PCPS…SDIA). Polar residues predominate over residues 581-600 (SGSNLEPGTSDLSSPRNFSP). Positions 602–614 (TDDHLFQADRENS) are enriched in basic and acidic residues. Polar residues predominate over residues 615-625 (DSSNPENQNMN). S821 is modified (phosphoserine). Residues 949–968 (IMKSGSGGERGGGPILQQKE) are disordered. Residues 953–962 (GSGGERGGGP) show a composition bias toward gly residues. Residues 1047–1067 (LLFLIFLATVYYYDLMIGLAF) traverse the membrane as a helical segment.

Interacts with PPP1CC catalytic subunit of PP1, and associates with glycogen. Phosphorylation at Ser-48 by ISPK stimulates the dephosphorylation of glycogen synthase and phosphorylase kinase. As to expression, skeletal muscle and heart.

Its subcellular location is the membrane. Seems to act as a glycogen-targeting subunit for PP1. PP1 is essential for cell division, and participates in the regulation of glycogen metabolism, muscle contractility and protein synthesis. Plays an important role in glycogen synthesis but is not essential for insulin activation of glycogen synthase. This is Protein phosphatase 1 regulatory subunit 3A (Ppp1r3a) from Mus musculus (Mouse).